A 1036-amino-acid chain; its full sequence is Mediator of RNA polymerase II transcription subunit 24 (1036 aa).

This sequence belongs to the Mediator complex subunit 24 family. Component of the Mediator complex.

It localises to the nucleus. Functionally, component of the Mediator complex, a coactivator involved in the regulated transcription of nearly all RNA polymerase II-dependent genes. Mediator functions as a bridge to convey information from gene-specific regulatory proteins to the basal RNA polymerase II transcription machinery. Mediator is recruited to promoters by direct interactions with regulatory proteins and serves as a scaffold for the assembly of a functional preinitiation complex with RNA polymerase II and the general transcription factors. The protein is Mediator of RNA polymerase II transcription subunit 24 (MED24) of Anopheles gambiae (African malaria mosquito).